A 374-amino-acid polypeptide reads, in one-letter code: Calcium/calmodulin-dependent protein kinase type 1 (374 aa).

The 257-residue stretch at 20–276 folds into the Protein kinase domain; that stretch reads YDFRDVLGTG…CEQALQHPWI (257 aa). Residues 26–34 and Lys-49 each bind ATP; that span reads LGTGAFSEV. Lys-59 participates in a covalent cross-link: Glycyl lysine isopeptide (Lys-Gly) (interchain with G-Cter in ubiquitin). Asp-141 functions as the Proton acceptor in the catalytic mechanism. At Thr-177 the chain carries Phosphothreonine; by CaMKK1 and CaMKK2. An autoinhibitory domain region spans residues 276-316; it reads IAGDTALDKNIHQSVSEQIKKNFAKSKWKQAFNATAVVRHM. The calmodulin-binding stretch occupies residues 296 to 317; it reads KNFAKSKWKQAFNATAVVRHMR. The Nuclear export signal motif lies at 315–321; that stretch reads HMRKLQL.

The protein belongs to the protein kinase superfamily. CAMK Ser/Thr protein kinase family. CaMK subfamily. In terms of assembly, monomer. Interacts with XPO1. In terms of processing, phosphorylated by CaMKK1 and CaMKK2 on Thr-177. Polybiquitinated by the E3 ubiquitin-protein ligase complex SCF(FBXL12), leading to proteasomal degradation. Ubiquitous.

The protein localises to the cytoplasm. The protein resides in the nucleus. The enzyme catalyses L-seryl-[protein] + ATP = O-phospho-L-seryl-[protein] + ADP + H(+). It catalyses the reaction L-threonyl-[protein] + ATP = O-phospho-L-threonyl-[protein] + ADP + H(+). Its activity is regulated as follows. Activated by Ca(2+)/calmodulin. Binding of calmodulin results in conformational change that relieves intrasteric autoinhibition and allows phosphorylation of Thr-177 within the activation loop by CaMKK1 or CaMKK2. Phosphorylation of Thr-177 results in several fold increase in total activity. Unlike CaMK4, is unable to exhibit autonomous activity after Ca(2+)/calmodulin activation. Calcium/calmodulin-dependent protein kinase that operates in the calcium-triggered CaMKK-CaMK1 signaling cascade and, upon calcium influx, regulates transcription activators activity, cell cycle, hormone production, cell differentiation, actin filament organization and neurite outgrowth. Recognizes the substrate consensus sequence [MVLIF]-x-R-x(2)-[ST]-x(3)-[MVLIF]. Regulates axonal extension and growth cone motility in hippocampal and cerebellar nerve cells. Upon NMDA receptor-mediated Ca(2+) elevation, promotes dendritic growth in hippocampal neurons and is essential in synapses for full long-term potentiation (LTP) and ERK2-dependent translational activation. Downstream of NMDA receptors, promotes the formation of spines and synapses in hippocampal neurons by phosphorylating ARHGEF7/BETAPIX on 'Ser-673', which results in the enhancement of ARHGEF7 activity and activation of RAC1. Promotes neuronal differentiation and neurite outgrowth by activation and phosphorylation of MARK2 on 'Ser-91', 'Ser-92', 'Ser-93' and 'Ser-294'. Promotes nuclear export of HDAC5 and binding to 14-3-3 by phosphorylation of 'Ser-259' and 'Ser-498' in the regulation of muscle cell differentiation. Regulates NUMB-mediated endocytosis by phosphorylation of NUMB on 'Ser-276' and 'Ser-295'. Involved in the regulation of basal and estrogen-stimulated migration of medulloblastoma cells through ARHGEF7/BETAPIX phosphorylation. Is required for proper activation of cyclin-D1/CDK4 complex during G1 progression in diploid fibroblasts. Plays a role in K(+) and ANG2-mediated regulation of the aldosterone synthase (CYP11B2) to produce aldosterone in the adrenal cortex. Phosphorylates EIF4G3/eIF4GII. In vitro phosphorylates CREB1, ATF1, CFTR, MYL9 and SYN1/synapsin I. This Mus musculus (Mouse) protein is Calcium/calmodulin-dependent protein kinase type 1 (Camk1).